The chain runs to 279 residues: Probable thymidylate synthase (279 aa).

DUMP contacts are provided by residues Arg21 and 136-137; that span reads RR. Catalysis depends on Cys156, which acts as the Nucleophile. Residues 177 to 180, Asn188, and 218 to 220 contribute to the dUMP site; these read RSVD and HIY. Asp180 is a (6R)-5,10-methylene-5,6,7,8-tetrahydrofolate binding site.

It belongs to the thymidylate synthase family.

The catalysed reaction is dUMP + (6R)-5,10-methylene-5,6,7,8-tetrahydrofolate = 7,8-dihydrofolate + dTMP. Sythesizes the thymine necessary for the viral DNA replication. In Escherichia coli (Enterobacteria phage T5), this protein is Probable thymidylate synthase.